The chain runs to 154 residues: Large ribosomal subunit protein uL13 (154 aa).

Belongs to the universal ribosomal protein uL13 family. In terms of assembly, part of the 50S ribosomal subunit.

In terms of biological role, this protein is one of the early assembly proteins of the 50S ribosomal subunit, although it is not seen to bind rRNA by itself. It is important during the early stages of 50S assembly. The sequence is that of Large ribosomal subunit protein uL13 from Brucella melitensis biotype 2 (strain ATCC 23457).